The chain runs to 153 residues: MKTFVLHIFIFALVAFASASRDSAKKIGSQYDNYATCLTEHSLTEDDIFSIGEVSSGQHKTNHEDTELHKNGCVMQCLLEKDGLMSGADYDEEKMREDYIKETGAQPGDQRIEALNACMHETKDMEDKCDKSLLLVACVLAAEAVLADSNEGA.

A signal peptide spans 1 to 19 (MKTFVLHIFIFALVAFASA). 3 cysteine pairs are disulfide-bonded: C37/C77, C73/C129, and C118/C138.

This sequence belongs to the PBP/GOBP family. In terms of assembly, homodimer.

The protein resides in the secreted. Colony queen number, a major feature of social organization, is associated with worker genotype for Gp-9. Colonies are headed by either a single reproductive queen (monogyne form) or multiple queens (polygyne form). Differences in worker Gp-9 genotypes between social forms may cause differences in workers' abilities to recognize queens and regulate their numbers. The polypeptide is Pheromone-binding protein Gp-9 (Solenopsis richteri (Black imported fire ant)).